Here is a 280-residue protein sequence, read N- to C-terminus: MKAFATRALAFSVAAGQALAAVTQGVSDNTYNRLVEMATISQAAYANLCNIPATIQTVEKIYNAQTDINGWVLRDDSRQEIITVFRGTGSDTNLQLDTNYTLAPFDTLPQCVGCAVHGGYYLGWLSVQDQVQSLVQQQASQYRGYAVTVTGHSLGASMAAITAAQLSATYDNVNLYTFGEPRTGNQAYASYMNEAFDSASPETTRYFRVTHADDGIPNVPPAEQGYVHSGVEYWSVEPHSPQNTYICTGDEIQCCEAQGGQGVNAAHVTYFGMTSGACSW.

Positions 1–20 (MKAFATRALAFSVAAGQALA) are cleaved as a signal peptide. Cystine bridges form between C49/C278, C111/C114, and C247/C254. N99 is a glycosylation site (N-linked (GlcNAc...) asparagine). The active-site Nucleophile is S153. D214 acts as the Charge relay system in catalysis. H267 serves as the catalytic Charge relay system.

It belongs to the AB hydrolase superfamily. FaeA family. Post-translationally, glycosylated.

It localises to the secreted. The enzyme catalyses feruloyl-polysaccharide + H2O = ferulate + polysaccharide.. Its activity is regulated as follows. Metal or basic ions Mn(2+), Ni(+), Mg(2+), and NH(4)(+) decrease the activity by 4.4% to 14.1%. The enzymatic activity is inhibited by Zn(2+) at a low concentration (1 mM) but not a high concentration (5 mM). Loses about a quarter of activity by the addition of 1 mM of Cu(2+) or Fe(3+) and activity is completely suppressed when the concentration was up to 5 mM. Low concentrations (0.25 and 0.5 M) of NaCl improve the activity by 5.6 % or 8.3%, respectively. Involved in degradation of plant cell walls. Hydrolyzes the feruloyl-arabinose ester bond in arabinoxylans, and the feruloyl-galactose ester bond in pectin. In Penicillium parvum (Eupenicillium parvum), this protein is Feruloyl esterase 1.